Consider the following 260-residue polypeptide: RNA polymerase sigma-G factor (260 aa).

Positions 1 to 71 (MSRNKVEICG…GEYVDDLFQV (71 aa)) are recognizes anti-sigma-G factor Gin (csfB). Positions 67-80 (DLFQVGCIGLMKSI) match the Polymerase core binding motif. The segment at residues 229–248 (QMEVAEEIGISQAQVSRLEK) is a DNA-binding region (H-T-H motif).

Belongs to the sigma-70 factor family. As to quaternary structure, interacts with anti-sigma-G factor Gin (csfB).

Its activity is regulated as follows. Activity repressed by anti-sigma-G factor Gin (csfB) and Lon protease during the early stages of forespore development. When both Gin and sigma-G are expressed in E.coli Gin inhibits sigma-G activity, strongly suggesting Gin inhibits by direct physical interaction. Functionally, sigma factors are initiation factors that promote the attachment of RNA polymerase to specific initiation sites and are then released. This sigma factor is responsible for the expression of sporulation specific genes in the forespore. The polypeptide is RNA polymerase sigma-G factor (sigG) (Bacillus subtilis (strain 168)).